An 89-amino-acid chain; its full sequence is UPF0297 protein lp_2275 (89 aa).

This sequence belongs to the UPF0297 family.

The chain is UPF0297 protein lp_2275 from Lactiplantibacillus plantarum (strain ATCC BAA-793 / NCIMB 8826 / WCFS1) (Lactobacillus plantarum).